The primary structure comprises 633 residues: ATP-dependent clpX-like chaperone, mitochondrial (633 aa).

The transit peptide at 1–56 directs the protein to the mitochondrion; that stretch reads MPSCGACTCGAAAVRLITSSLASAQRGISGGRIHMSVLGRLGTFETQILQRAPLRS. Residues 68-100 are disordered; it reads DGISKDGSGDGNKKSASEGSSKKSGSGNSGKGG. The segment covering 69–83 has biased composition (basic and acidic residues); that stretch reads GISKDGSGDGNKKSA. The segment covering 84–93 has biased composition (low complexity); sequence SEGSSKKSGS. Residues 93–146 enclose the ClpX-type ZB domain; it reads SGNSGKGGNQLRCPKCGDLCTHVETFVSSTRFVKCEKCHHFFVVLSEADSKKSI. Zn(2+) contacts are provided by Cys-105, Cys-108, Cys-127, and Cys-130. 294–301 provides a ligand contact to ATP; the sequence is PTGSGKTL. An N6-acetyllysine modification is found at Lys-437. A compositionally biased stretch (basic and acidic residues) spans 598-610; sequence KEPGYIRAPTKES. A disordered region spans residues 598–633; sequence KEPGYIRAPTKESSEEEYDSGVEEEGWPRQADAANS. Residues 611–622 show a composition bias toward acidic residues; sequence SEEEYDSGVEEE. Position 617 is a phosphoserine (Ser-617).

It belongs to the ClpX chaperone family. As to quaternary structure, homohexamer that forms a ring structure; this hexamerization requires ATP binding. Component of the ClpXP complex formed by the assembly of two CLPP heptameric rings with two CLPX hexameric rings, giving rise to a symmetrical structure with two central CLPP rings flanked by a CLPX ring at either end of the complex. Interacts with TFAM. As to expression, higher expression in skeletal muscle and heart and to a lesser extent in liver, brain, placenta, lung, kidney and pancreas.

The protein localises to the mitochondrion. It localises to the mitochondrion matrix. The protein resides in the mitochondrion nucleoid. It catalyses the reaction ATP + H2O = ADP + phosphate + H(+). In terms of biological role, ATP-dependent chaperone that functions as an unfoldase. As part of the ClpXP protease complex, it recognizes specific protein substrates, unfolds them using energy derived from ATP hydrolysis, and then translocates them to the proteolytic subunit (CLPP) of the ClpXP complex for degradation. Thanks to its chaperone activity, it also functions in the incorporation of the pyridoxal phosphate cofactor into 5-aminolevulinate synthase, thereby activating 5-aminolevulinate (ALA) synthesis, the first step in heme biosynthesis. This chaperone is also involved in the control of mtDNA nucleoid distribution, by regulating mitochondrial transcription factor A (TFAM) activity. The chain is ATP-dependent clpX-like chaperone, mitochondrial from Homo sapiens (Human).